A 202-amino-acid chain; its full sequence is Glycerol-3-phosphate acyltransferase (202 aa).

5 consecutive transmembrane segments (helical) span residues 3–23 (NLII…LILA), 87–107 (LLWS…YLLF), 118–138 (GAMI…WVVI), 144–164 (ISSL…FIFN), and 167–187 (LEIH…YKHL).

This sequence belongs to the PlsY family. In terms of assembly, probably interacts with PlsX.

Its subcellular location is the cell inner membrane. The enzyme catalyses an acyl phosphate + sn-glycerol 3-phosphate = a 1-acyl-sn-glycero-3-phosphate + phosphate. It participates in lipid metabolism; phospholipid metabolism. Functionally, catalyzes the transfer of an acyl group from acyl-phosphate (acyl-PO(4)) to glycerol-3-phosphate (G3P) to form lysophosphatidic acid (LPA). This enzyme utilizes acyl-phosphate as fatty acyl donor, but not acyl-CoA or acyl-ACP. The polypeptide is Glycerol-3-phosphate acyltransferase (Campylobacter jejuni subsp. jejuni serotype O:2 (strain ATCC 700819 / NCTC 11168)).